The following is a 128-amino-acid chain: Infection structure-specific protein 56 (128 aa).

Composition is skewed to polar residues over residues His-27–His-36 and Thr-87–Ser-101. Disordered regions lie at residues His-27 to Ser-48 and Gly-86 to Ala-128. Residues Lys-115–Ala-128 are compositionally biased toward basic and acidic residues.

Its function is as follows. General role in the development of germlings including formation of the infection structures. The chain is Infection structure-specific protein 56 (INF56) from Uromyces appendiculatus (Rust fungus).